Here is a 226-residue protein sequence, read N- to C-terminus: Pro-opiomelanocortin (226 aa).

The signal sequence occupies residues 1–22 (MVCAPWLLAVVVVCVCNPGVGG). The propeptide occupies 23–97 (QCWDSSHCKD…DPEPHSDKRH (75 aa)). Ser98 carries the N-acetylserine; in Corticotropin modification. Tyr198 is modified (N-acetyltyrosine; in Beta-endorphin and Met-enkephalin).

The protein belongs to the POMC family. Post-translationally, specific enzymatic cleavages at paired basic residues yield the different active peptides.

It localises to the secreted. In terms of biological role, stimulates the adrenal glands to release cortisol. Its function is as follows. Anorexigenic peptide. Increases the pigmentation of skin by increasing melanin production in melanocytes. Functionally, increases the pigmentation of skin by increasing melanin production in melanocytes. Endogenous orexigenic opiate. In terms of biological role, endogenous opiate. The chain is Pro-opiomelanocortin (pomc) from Oncorhynchus keta (Chum salmon).